Reading from the N-terminus, the 296-residue chain is Probable lipid kinase YegS-like (296 aa).

Positions 1-130 (MPHTLLILNG…IDLAQVNGEH (130 aa)) constitute a DAGKc domain. ATP-binding positions include Thr-37, 63 to 69 (GDGTINE), and Thr-92. Residues Leu-212, Asp-215, and Leu-217 each contribute to the Mg(2+) site. The active-site Proton acceptor is the Glu-268.

Belongs to the diacylglycerol/lipid kinase family. YegS lipid kinase subfamily. Mg(2+) is required as a cofactor. Ca(2+) serves as cofactor.

The protein localises to the cytoplasm. Functionally, probably phosphorylates lipids; the in vivo substrate is unknown. The sequence is that of Probable lipid kinase YegS-like from Yersinia pestis bv. Antiqua (strain Angola).